The following is an 86-amino-acid chain: Anti-adapter protein IraP (86 aa).

Residues 1–36 (MKNLIAELLFKLAQKEEESKELCAQVEALEIIVTAM) adopt a coiled-coil conformation.

The protein belongs to the IraP family. Interacts with RssB.

It localises to the cytoplasm. In terms of biological role, inhibits RpoS proteolysis by regulating RssB activity, thereby increasing the stability of the sigma stress factor RpoS especially during phosphate starvation, but also in stationary phase and during nitrogen starvation. Its effect on RpoS stability is due to its interaction with RssB, which probably blocks the interaction of RssB with RpoS, and the consequent delivery of the RssB-RpoS complex to the ClpXP protein degradation pathway. The sequence is that of Anti-adapter protein IraP from Escherichia coli O127:H6 (strain E2348/69 / EPEC).